The chain runs to 38 residues: A2-specific pheromone (38 aa).

C35 is subject to Cysteine methyl ester. C35 carries the S-farnesyl cysteine lipid modification. A propeptide spans 36-38 (removed in mature form); that stretch reads LIA.

The protein resides in the cell membrane. In terms of biological role, mating pheromone for A2 allele. In Mycosarcoma maydis (Corn smut fungus), this protein is A2-specific pheromone (MFA2).